The primary structure comprises 91 residues: Small ribosomal subunit protein uS19 (91 aa).

The protein belongs to the universal ribosomal protein uS19 family.

Functionally, protein S19 forms a complex with S13 that binds strongly to the 16S ribosomal RNA. The protein is Small ribosomal subunit protein uS19 of Methylobacillus flagellatus (strain ATCC 51484 / DSM 6875 / VKM B-1610 / KT).